Consider the following 385-residue polypeptide: Aspartate/prephenate aminotransferase (385 aa).

Residues Gly-39, Trp-125, and Asn-175 each coordinate L-aspartate. The residue at position 234 (Lys-234) is an N6-(pyridoxal phosphate)lysine. Residue Arg-361 coordinates L-aspartate.

This sequence belongs to the class-I pyridoxal-phosphate-dependent aminotransferase family. Homodimer. The cofactor is pyridoxal 5'-phosphate.

It localises to the cytoplasm. It catalyses the reaction L-aspartate + 2-oxoglutarate = oxaloacetate + L-glutamate. The enzyme catalyses L-arogenate + oxaloacetate = prephenate + L-aspartate. Functionally, catalyzes the reversible conversion of aspartate and 2-oxoglutarate to glutamate and oxaloacetate. Can also transaminate prephenate in the presence of aspartate. The sequence is that of Aspartate/prephenate aminotransferase (aspC) from Thermus thermophilus (strain ATCC 27634 / DSM 579 / HB8).